We begin with the raw amino-acid sequence, 427 residues long: Transcription termination factor Rho (427 aa).

Residues 55 to 130 (YFFGEGVLEI…IKIEAINYRP (76 aa)) form the Rho RNA-BD domain. ATP is bound by residues 173-178 (GKGQRG), 185-190 (KAGKTT), and arginine 216.

Belongs to the Rho family. As to quaternary structure, homohexamer. The homohexamer assembles into an open ring structure.

In terms of biological role, facilitates transcription termination by a mechanism that involves Rho binding to the nascent RNA, activation of Rho's RNA-dependent ATPase activity, and release of the mRNA from the DNA template. This Thermotoga maritima (strain ATCC 43589 / DSM 3109 / JCM 10099 / NBRC 100826 / MSB8) protein is Transcription termination factor Rho.